The following is a 431-amino-acid chain: Enolase (431 aa).

Gln163 is a (2R)-2-phosphoglycerate binding site. The active-site Proton donor is Glu205. Residues Asp242, Glu288, and Asp315 each contribute to the Mg(2+) site. Lys340, Arg369, Ser370, and Lys391 together coordinate (2R)-2-phosphoglycerate. Lys340 functions as the Proton acceptor in the catalytic mechanism.

It belongs to the enolase family. Mg(2+) is required as a cofactor.

The protein resides in the cytoplasm. The protein localises to the secreted. Its subcellular location is the cell surface. It catalyses the reaction (2R)-2-phosphoglycerate = phosphoenolpyruvate + H2O. Its pathway is carbohydrate degradation; glycolysis; pyruvate from D-glyceraldehyde 3-phosphate: step 4/5. Its function is as follows. Catalyzes the reversible conversion of 2-phosphoglycerate (2-PG) into phosphoenolpyruvate (PEP). It is essential for the degradation of carbohydrates via glycolysis. In Bacillus cereus (strain ZK / E33L), this protein is Enolase.